A 223-amino-acid polypeptide reads, in one-letter code: 7-cyano-7-deazaguanine synthase (223 aa).

8–18 (LSGGLDSATTL) serves as a coordination point for ATP. Residues C187, C197, C200, and C203 each contribute to the Zn(2+) site.

This sequence belongs to the QueC family. Zn(2+) serves as cofactor.

It catalyses the reaction 7-carboxy-7-deazaguanine + NH4(+) + ATP = 7-cyano-7-deazaguanine + ADP + phosphate + H2O + H(+). The protein operates within purine metabolism; 7-cyano-7-deazaguanine biosynthesis. Catalyzes the ATP-dependent conversion of 7-carboxy-7-deazaguanine (CDG) to 7-cyano-7-deazaguanine (preQ(0)). In Methylococcus capsulatus (strain ATCC 33009 / NCIMB 11132 / Bath), this protein is 7-cyano-7-deazaguanine synthase.